A 216-amino-acid chain; its full sequence is Nucleoid occlusion factor SlmA (216 aa).

The interval 1–23 (MAEQLTLDSIEPEPEKQSAKIEK) is disordered. Positions 13–23 (EPEKQSAKIEK) are enriched in basic and acidic residues. Residues 28 to 88 (ERRQQVLTVL…ALIENIESSL (61 aa)) enclose the HTH tetR-type domain. Positions 51–70 (TTARLAKEVGVSEAALYRYF) form a DNA-binding region, H-T-H motif.

The protein belongs to the nucleoid occlusion factor SlmA family. Homodimer. Interacts with FtsZ.

It is found in the cytoplasm. The protein resides in the nucleoid. Required for nucleoid occlusion (NO) phenomenon, which prevents Z-ring formation and cell division over the nucleoid. Acts as a DNA-associated cell division inhibitor that binds simultaneously chromosomal DNA and FtsZ, and disrupts the assembly of FtsZ polymers. SlmA-DNA-binding sequences (SBS) are dispersed on non-Ter regions of the chromosome, preventing FtsZ polymerization at these regions. The sequence is that of Nucleoid occlusion factor SlmA from Mannheimia succiniciproducens (strain KCTC 0769BP / MBEL55E).